A 183-amino-acid polypeptide reads, in one-letter code: Translation initiation factor IF-3 (183 aa).

It belongs to the IF-3 family. Monomer.

The protein localises to the cytoplasm. IF-3 binds to the 30S ribosomal subunit and shifts the equilibrium between 70S ribosomes and their 50S and 30S subunits in favor of the free subunits, thus enhancing the availability of 30S subunits on which protein synthesis initiation begins. This is Translation initiation factor IF-3 from Pseudomonas syringae pv. tomato (strain ATCC BAA-871 / DC3000).